Reading from the N-terminus, the 143-residue chain is MCKKARKRGLLTIAFTILLFVIILVDIDRDRYLVRCGKDWLEFDNLCYFISENKLSWDDSMMVCDNLGGGNNININTNSGLLNTSKDYWIKIVDELDCTNINMCNFLYSNIVGCDICTIEKFYICIKPINKINLFSYFVEYTK.

This Vertebrata (FPV) protein is Putative protein FPV235.